Reading from the N-terminus, the 855-residue chain is E3 ubiquitin-protein ligase TRIM71 (855 aa).

Residue Ala2 is modified to N-acetylalanine. The RING-type zinc finger occupies 12–94; sequence CLLCKEMCGS…ALKLRCPVCD (83 aa). A compositionally biased stretch (low complexity) spans 26 to 42; the sequence is SSNSSASSSSSQTSTSS. Disordered regions lie at residues 26-48 and 127-177; these read SSNS…GGGP and EEPP…SPGS. Residues 135 to 145 show a composition bias toward gly residues; the sequence is RAGGGPGGAGG. Over residues 147–157 the composition is skewed to basic residues; it reads SNHRHHAHHPA. The B box-type 1; atypical zinc-finger motif lies at 181 to 228; that stretch reads RRPHGCSSCDEGNAASSRCLDCQEHLCDNCVRAHQRVRLTKDHYIERG. The B box-type 2 zinc-finger motif lies at 260–301; the sequence is ERLGFCQHHDDEVLHLYCDTCSVPICRECTLGRHGGHSFAYL. Positions 265, 268, 288, and 293 each coordinate Zn(2+). 2 coiled-coil regions span residues 314-352 and 378-411; these read QLLA…SEVK and QVKA…VLEE. Residues 466-567 form a Filamin repeat; sequence SSGAFAPLTK…IENSPFKVVV (102 aa). 6 NHL repeats span residues 580 to 623, 627 to 670, 674 to 717, 721 to 764, 768 to 811, and 815 to 855; these read GLSF…FKPC, HHKF…FTFE, LLKF…FGPD, LNKY…IHPD, ARFL…FEAN, and LCKF…ILIF.

This sequence belongs to the TRIM/RBCC family. As to quaternary structure, interacts (via NHL repeats) with AGO2; the interaction increases in presence of RNA. Interacts with HSP90AA1. Interacts (via NHL repeats) with MOV10, PABPC1, PUM1, PUM2, STAU2, XRN1 and XRN2 in an RNA-dependent manner. Interacts with SHCBP1; leading to enhance its stability. In terms of processing, autoubiquitinated. In terms of tissue distribution, highly expressed in undifferentiated embryonic stem cells (ESCs). Expressed in the epiblast and in interfollicular epidermal stem cells during early development. Also expressed in male germ cells and in the reproductive tract. Highly expressed in neuroepithelial cells, and its expression declines as neurogenesis proceeds (at protein level). Expressed in ependymal cells of the brain.

Its subcellular location is the cytoplasm. It is found in the P-body. It carries out the reaction S-ubiquitinyl-[E2 ubiquitin-conjugating enzyme]-L-cysteine + [acceptor protein]-L-lysine = [E2 ubiquitin-conjugating enzyme]-L-cysteine + N(6)-ubiquitinyl-[acceptor protein]-L-lysine.. The protein operates within protein modification; protein ubiquitination. E3 ubiquitin-protein ligase that cooperates with the microRNAs (miRNAs) machinery and promotes embryonic stem cells proliferation and maintenance. Binds to miRNAs and associates with AGO2, participating in post-transcriptional repression of transcripts such as CDKN1A. Facilitates the G1-S transition to promote rapid embryonic stem cell self-renewal by repressing CDKN1A expression. In addition, participates in post-transcriptional mRNA repression in a miRNA independent mechanism. Required to maintain proliferation and prevent premature differentiation of neural progenitor cells during early neural development: positively regulates FGF signaling by controlling the stability of SHCBP1. Specific regulator of miRNA biogenesis. miRNA Binds MIR29A hairpin and postranscriptionally modulates MIR29A levels, which indirectly regulates TET proteins expression. In Mus musculus (Mouse), this protein is E3 ubiquitin-protein ligase TRIM71 (Trim71).